A 388-amino-acid chain; its full sequence is LL-diaminopimelate aminotransferase (388 aa).

Substrate contacts are provided by tyrosine 13, glycine 38, lysine 102, tyrosine 126, and asparagine 176. Residues 101–102, tyrosine 126, asparagine 176, tyrosine 207, and 235–237 contribute to the pyridoxal 5'-phosphate site; these read SK and SLS. At lysine 238 the chain carries N6-(pyridoxal phosphate)lysine. Arginine 246 serves as a coordination point for pyridoxal 5'-phosphate. Arginine 364 serves as a coordination point for substrate.

The protein belongs to the class-I pyridoxal-phosphate-dependent aminotransferase family. LL-diaminopimelate aminotransferase subfamily. Homodimer. It depends on pyridoxal 5'-phosphate as a cofactor.

It carries out the reaction (2S,6S)-2,6-diaminopimelate + 2-oxoglutarate = (S)-2,3,4,5-tetrahydrodipicolinate + L-glutamate + H2O + H(+). Its pathway is amino-acid biosynthesis; L-lysine biosynthesis via DAP pathway; LL-2,6-diaminopimelate from (S)-tetrahydrodipicolinate (aminotransferase route): step 1/1. In terms of biological role, involved in the synthesis of meso-diaminopimelate (m-DAP or DL-DAP), required for both lysine and peptidoglycan biosynthesis. Catalyzes the direct conversion of tetrahydrodipicolinate to LL-diaminopimelate. This is LL-diaminopimelate aminotransferase from Dehalococcoides mccartyi (strain ATCC BAA-2100 / JCM 16839 / KCTC 5957 / BAV1).